An 860-amino-acid chain; its full sequence is Nuclear cap-binding protein complex subunit 1 (860 aa).

In terms of domain architecture, MIF4G spans 36–271 (CKDMLPDIRT…SNVKNALAND (236 aa)).

The protein belongs to the NCBP1 family. In terms of assembly, component of the nuclear cap-binding complex (CBC).

It is found in the nucleus. In terms of biological role, component of the cap-binding complex (CBC) involved in the nuclear export of capped U snRNAs. The CBC complex is required for efficient pre-mRNA splicing through efficient commitment complex and spliceosome formation; and involved in rRNA processing at sites A0, A1 and A2. This is Nuclear cap-binding protein complex subunit 1 (CBC1) from Eremothecium gossypii (strain ATCC 10895 / CBS 109.51 / FGSC 9923 / NRRL Y-1056) (Yeast).